Reading from the N-terminus, the 127-residue chain is Mediator of RNA polymerase II transcription subunit 9 (127 aa).

Residues 95–119 (QKEQEIEAKKRVHRQLRQRVEEIAG) adopt a coiled-coil conformation.

It belongs to the Mediator complex subunit 9 family. As to quaternary structure, component of the Mediator complex.

It localises to the nucleus. Functionally, component of the Mediator complex, a coactivator involved in the regulated transcription of nearly all RNA polymerase II-dependent genes. Mediator functions as a bridge to convey information from gene-specific regulatory proteins to the basal RNA polymerase II transcription machinery. Mediator is recruited to promoters by direct interactions with regulatory proteins and serves as a scaffold for the assembly of a functional preinitiation complex with RNA polymerase II and the general transcription factors. In Eremothecium gossypii (strain ATCC 10895 / CBS 109.51 / FGSC 9923 / NRRL Y-1056) (Yeast), this protein is Mediator of RNA polymerase II transcription subunit 9 (CSE2).